Consider the following 959-residue polypeptide: Autophagy-related protein 18g (959 aa).

WD repeat units lie at residues 376-416 (AHTS…SHNA) and 438-479 (ITSA…AAFQ). Positions 802–832 (GSIESAESSEEGSTKQMENLHDSDHMSNSIK) are disordered.

This sequence belongs to the WD repeat PROPPIN family. In terms of assembly, component of the PI(3,5)P2 regulatory complex at least composed of ATG18, SAC/FIG4, FAB1 and VAC14. In terms of tissue distribution, expressed in leaves.

It is found in the preautophagosomal structure membrane. It localises to the vacuole membrane. Functionally, the PI(3,5)P2 regulatory complex regulates both the synthesis and turnover of phosphatidylinositol 3,5-bisphosphate (PtdIns(3,5)P2). Required for autophagy. In Arabidopsis thaliana (Mouse-ear cress), this protein is Autophagy-related protein 18g (ATG18G).